The chain runs to 134 residues: Small ribosomal subunit protein uS9 (134 aa).

The tract at residues 114 to 134 is disordered; that stretch reads QKEAKNFGGPGARSKYQKSYR.

Belongs to the universal ribosomal protein uS9 family.

The polypeptide is Small ribosomal subunit protein uS9 (Methanosarcina mazei (strain ATCC BAA-159 / DSM 3647 / Goe1 / Go1 / JCM 11833 / OCM 88) (Methanosarcina frisia)).